We begin with the raw amino-acid sequence, 738 residues long: MDAFKLLTRATKLKGGAAPSSAQSSTRLPSTGKAANPQLFRSSEADKVLEEARHGKKRKRVAGPEAAESDDDGAELNFFGSSKARRSSASMAKEQEKEQQEQQEHRDDTSDADDADEMDEVQCRTVLNAHKIKVTDMRDLEEIQTVRVESEEPKKKKKKRKQQEESTPALTKKEQKKARRVYPQPLVSFKELRTRYKISRRLAENIAEQGFSVPTEVQLGTLPLLLEGFKVSGNSKDAESIEPDLLVVAPTGSGKTLSFLIPVINKIVRHHHEQEEERGIFSVVVAPTKELASQIVNEGRKLVHGTGVKITLMKKGMRVVDREDDDDENSHSEDSEEGSESEQDEPSTTRKKKGKAPVTKSDILVTTPLLLVNALSANRTKPMATLPLVRNIVLDEADVLLDELFRDQTLDIWRACTHPELRASLWSATMGSNIEDLAKSTIKERKQAYDRTNSYPLLRLVVGLKDSAIPNIEHKLVYAATEQGKLLGLRQLLHPAAASASDVRLRPPFLIFTQTIPRAIALHSELRYDIPAEAGGSSRIAVLHSDLSDGQRSEIMKNFRKGEIWILVTTDLLARGVDFRGINGVVNYDIPNSAAVYVHRVGRTGRAGREGGIAVTYYTKEDIPYVKSIANIIDVSEKLRGKDGEKSIQKWLLDALPDLSKKDKKELKKHGVKARQSNLKSVKDDKEHRKTRISTKSGFDRRMENKKKALIAASRNRKSKTQSTDPGSDNESWDGLDG.

Disordered regions lie at residues 13–116 (LKGG…DDAD) and 148–179 (VESE…KKAR). The segment covering 20-29 (SSAQSSTRLP) has biased composition (polar residues). Composition is skewed to basic and acidic residues over residues 43-53 (SEADKVLEEAR) and 93-109 (KEQE…RDDT). A Q motif motif is present at residues 191–219 (ELRTRYKISRRLAENIAEQGFSVPTEVQL). The 213-residue stretch at 236 to 448 (KDAESIEPDL…KSTIKERKQA (213 aa)) folds into the Helicase ATP-binding domain. Residue 249-256 (APTGSGKT) coordinates ATP. The disordered stretch occupies residues 319–358 (VVDREDDDDENSHSEDSEEGSESEQDEPSTTRKKKGKAPV). Residues 322-345 (REDDDDENSHSEDSEEGSESEQDE) are compositionally biased toward acidic residues. The DEAD box signature appears at 395 to 398 (DEAD). In terms of domain architecture, Helicase C-terminal spans 488-656 (GLRQLLHPAA…SIQKWLLDAL (169 aa)). The tract at residues 664–738 (KKELKKHGVK…DNESWDGLDG (75 aa)) is disordered. The segment covering 698–707 (GFDRRMENKK) has biased composition (basic and acidic residues). Basic residues predominate over residues 708–720 (KALIAASRNRKSK). Residues 721-730 (TQSTDPGSDN) show a composition bias toward polar residues.

It belongs to the DEAD box helicase family. DDX52/ROK1 subfamily. Interacts with the U3 snoRNA and is associated with the 90S and 40S pre-ribosomes.

The protein resides in the nucleus. Its subcellular location is the nucleolus. The enzyme catalyses ATP + H2O = ADP + phosphate + H(+). In terms of biological role, ATP-dependent RNA helicase involved in 40S ribosomal subunit biogenesis. Required for the processing and cleavage of 35S pre-rRNA at sites A0, A1, and A2, leading to mature 18S rRNA. This is ATP-dependent RNA helicase rok1 (rok1) from Neosartorya fischeri (strain ATCC 1020 / DSM 3700 / CBS 544.65 / FGSC A1164 / JCM 1740 / NRRL 181 / WB 181) (Aspergillus fischerianus).